We begin with the raw amino-acid sequence, 498 residues long: Germ cell-less protein-like 2 (498 aa).

A Nuclear localization signal motif is present at residues serine 33–asparagine 39. The region spanning serine 90 to threonine 160 is the BTB domain.

In terms of assembly, interacts with CUL3.

It is found in the nucleus matrix. It functions in the pathway protein modification; protein ubiquitination. In terms of biological role, possible function in spermatogenesis. Probable substrate-specific adapter of an E3 ubiquitin-protein ligase complex which mediates the ubiquitination and subsequent proteasomal degradation of target proteins. In Mus musculus (Mouse), this protein is Germ cell-less protein-like 2 (Gmcl2).